The sequence spans 86 residues: Small ribosomal subunit protein bS20 (86 aa).

Belongs to the bacterial ribosomal protein bS20 family.

Functionally, binds directly to 16S ribosomal RNA. The protein is Small ribosomal subunit protein bS20 of Bifidobacterium adolescentis (strain ATCC 15703 / DSM 20083 / NCTC 11814 / E194a).